Consider the following 181-residue polypeptide: Peptide deformylase (181 aa).

Fe cation-binding residues include Cys103 and His145. The active site involves Glu146. His149 is a binding site for Fe cation.

The protein belongs to the polypeptide deformylase family. Fe(2+) is required as a cofactor.

The catalysed reaction is N-terminal N-formyl-L-methionyl-[peptide] + H2O = N-terminal L-methionyl-[peptide] + formate. Functionally, removes the formyl group from the N-terminal Met of newly synthesized proteins. Requires at least a dipeptide for an efficient rate of reaction. N-terminal L-methionine is a prerequisite for activity but the enzyme has broad specificity at other positions. The sequence is that of Peptide deformylase from Orientia tsutsugamushi (strain Ikeda) (Rickettsia tsutsugamushi).